The sequence spans 144 residues: MLMPKRTKFRRQMRGRMKGKAKGGKEIAFGEFGLQALEPAWINSRQIEAARIALTRYIKRGGKVWVKIFPDKPVTQKPAETRMGGGKGSPEFWAAVVKPGRILFEVAGVPKETAREAMRLASHKLPIKTKFVEREEMGGDANES.

It belongs to the universal ribosomal protein uL16 family. Part of the 50S ribosomal subunit.

Binds 23S rRNA and is also seen to make contacts with the A and possibly P site tRNAs. The protein is Large ribosomal subunit protein uL16 of Natranaerobius thermophilus (strain ATCC BAA-1301 / DSM 18059 / JW/NM-WN-LF).